The following is an 899-amino-acid chain: Translation initiation factor IF-2 (899 aa).

Disordered regions lie at residues 116-135 (AKAR…ARLQ), 170-189 (RGGG…EQKK), and 262-306 (DREI…ANKH). The tr-type G domain maps to 399 to 568 (TRPPVVTIMG…LIQSELMELK (170 aa)). The G1 stretch occupies residues 408–415 (GHVDHGKT). Residue 408-415 (GHVDHGKT) coordinates GTP. A G2 region spans residues 433–437 (GITQH). Residues 454-457 (DTPG) are G3. GTP-binding positions include 454 to 458 (DTPGH) and 508 to 511 (NKMD). Residues 508 to 511 (NKMD) are G4. The tract at residues 544–546 (SAH) is G5.

The protein belongs to the TRAFAC class translation factor GTPase superfamily. Classic translation factor GTPase family. IF-2 subfamily.

Its subcellular location is the cytoplasm. One of the essential components for the initiation of protein synthesis. Protects formylmethionyl-tRNA from spontaneous hydrolysis and promotes its binding to the 30S ribosomal subunits. Also involved in the hydrolysis of GTP during the formation of the 70S ribosomal complex. In Acinetobacter baumannii (strain AB307-0294), this protein is Translation initiation factor IF-2.